The primary structure comprises 494 residues: MKKIAFDSEKYLNLQRDHILERINQFEGKLYMEFGGKMLEDFHAARVLPGYEPDNKIRLLKELKDQVEIVIAINANNIEHSKARGDLGISYDQEVLRLIDTFNELDIYVGSVVITQYSGQPAADLFRSQLEKNGIASYIHYPIKGYPTDMDHIISPEGMGKNDYIKTSRNLVVVTAPGPGSGKLATCLSNMYHDQINGIKSGYAKFETFPVWNLPLHHPVNLAYEAATADLDDVNMIDPFHLQTYGKTTVNYNRDIEIFPVLKRMLERILGKSPYASPTDMGVNMVGFAIVDNDAAIEASQQEIIRRYYQTILDFKAERVSESAVKKIELLMNDLGITPLDRKVTVVARDKAESTGEPALALELPNGEIVTGKTSELFGPTAAVLINAIKKLAHIAKETKLIEPEYVKPIQGLKINHLGSRNPRLHSNEILMALAITAMENQDAANAMQQLGNLKGSEAHSTVTLTDEDKNVLRKLGIHVTMDPVYQYDRLYRK.

The protein belongs to the UPF0371 family.

In Streptococcus sanguinis (strain SK36), this protein is UPF0371 protein SSA_0208.